Reading from the N-terminus, the 110-residue chain is UPF0122 protein GWCH70_1086 (110 aa).

This sequence belongs to the UPF0122 family.

Might take part in the signal recognition particle (SRP) pathway. This is inferred from the conservation of its genetic proximity to ftsY/ffh. May be a regulatory protein. This chain is UPF0122 protein GWCH70_1086, found in Geobacillus sp. (strain WCH70).